The chain runs to 357 residues: Guanine nucleotide-binding protein alpha-16 subunit (357 aa).

Glycine 2 carries the N-myristoyl glycine lipid modification. Cysteine 3 is lipidated: S-palmitoyl cysteine. A G-alpha domain is found at 32–357 (RTIKLLLLGA…RDNLRTCGLY (326 aa)). Residues 35-48 (KLLLLGAGESGKST) are G1 motif. GTP contacts are provided by residues 40-47 (GAGESGKS), 175-181 (LRTRIKT), 200-204 (DVGGQ), 269-272 (NKKD), and alanine 329. Mg(2+) contacts are provided by serine 47 and threonine 181. The G2 motif stretch occupies residues 173-181 (DILRTRIKT). The interval 196-205 (FLVFDVGGQR) is G3 motif. The segment at 265 to 272 (ILFLNKKD) is G4 motif. The tract at residues 327–332 (TCATDT) is G5 motif.

This sequence belongs to the G-alpha family. G proteins are composed of 3 units; alpha, beta and gamma. The alpha chain contains the guanine nucleotide binding site.

Its function is as follows. Guanine nucleotide-binding proteins (G proteins) are involved as modulators or transducers in various transmembrane signaling systems. In the 1-cell embryo, probably together with goa-1, controls nuclear rotation and spindle elongation during mitosis. During the first embryonic cell divisons, plays a role in gpr-1/2 cortical localization and in the proper orientation of EMS blastomere mitotic spindle. The sequence is that of Guanine nucleotide-binding protein alpha-16 subunit (gpa-16) from Caenorhabditis elegans.